The sequence spans 516 residues: MFLAKNLKNNKIKVCLPKKKFAALSTASIQTNERPNPDKVLKDIAKYVHETPLKSSLALDTARLCFLDTLGCGLAALKFKQAQNIIKPIVPGTIVPSGTKILGTSYVMDPVKGAFAIGTLIRWLDYNDCWLAAEWGHPSDNLGGILAVADHLSRLNKATHGKNGKQFLVKDVLEAMIKAHEIQGIIALENSFNKVGLDHVVLVKVATAGVVSKMLGLSQEQTIEALSQAFVDGQSLRTYRHAPNTGSRKSWAAGDAVSRAVNLAYLVKNANVGTIPSVLTARTWGFYDVLFKGKPFSFQQRSKYDSYVMENVLFKISFPAEFHAQTAVEAAVKAYRILAKQGKTFKDIKSIRIRTQEAAMRIIDKSGPLYNYADRDHCIQYMIAVPLITGNLTATDYSDEVARNPEIDNLRSKMYCIEDTHLTQNYHDPDKRSIGNALLIELNDGTQLDEIFVEYPVGHKFRREEGIPLLMNKFQRHLREHFVESPDKVDLIMKVSSKTNFLNMQIDKYMDLFTEG.

It belongs to the PrpD family.

It catalyses the reaction (2S,3S)-2-methylcitrate = 2-methyl-cis-aconitate + H2O. The protein operates within organic acid metabolism; propanoate degradation. Its function is as follows. Catalyzes the stereospecific dehydration of (2S,3S)-2-methylcitrate (2-MC) to yield the cis isomer of 2-methyl-aconitate. This is Probable 2-methylcitrate dehydratase (PDH1) from Saccharomyces cerevisiae (strain ATCC 204508 / S288c) (Baker's yeast).